The sequence spans 95 residues: Protein TusB (95 aa).

This sequence belongs to the DsrH/TusB family. As to quaternary structure, heterohexamer, formed by a dimer of trimers. The hexameric TusBCD complex contains 2 copies each of TusB, TusC and TusD. The TusBCD complex interacts with TusE.

The protein resides in the cytoplasm. Functionally, part of a sulfur-relay system required for 2-thiolation of 5-methylaminomethyl-2-thiouridine (mnm(5)s(2)U) at tRNA wobble positions. In Serratia proteamaculans (strain 568), this protein is Protein TusB.